A 564-amino-acid polypeptide reads, in one-letter code: 4-coumarate--CoA ligase 1 (564 aa).

ATP-binding residues include serine 209, serine 210, glycine 211, threonine 212, threonine 213, and lysine 217. (E)-4-coumaroyl-AMP is bound by residues tyrosine 259 and threonine 263. Arginine 280 contributes to the CoA binding site. Residues 282–351 (DLAAMMDLVE…AKLPGAVLGQ (70 aa)) are SBD1. (E)-4-coumaroyl-AMP is bound by residues alanine 329, glutamine 351, glycine 352, threonine 356, and methionine 364. 3 residues coordinate ATP: glutamine 351, glycine 352, and threonine 356. The interval 352-419 (GYGMTEAGPV…IRGQQIMKGY (68 aa)) is SBD2. ATP is bound by residues aspartate 440 and arginine 455. Positions 457 and 461 each coordinate (E)-4-coumaroyl-AMP. The CoA site is built by arginine 463 and glycine 464. Lysine 547 contacts ATP.

This sequence belongs to the ATP-dependent AMP-binding enzyme family. Requires Mg(2+) as cofactor. As to expression, expressed in roots, stems, leaf blades and leaf sheaths.

The enzyme catalyses (E)-ferulate + ATP + CoA = (E)-feruloyl-CoA + AMP + diphosphate. It carries out the reaction (E)-4-coumarate + ATP + CoA = (E)-4-coumaroyl-CoA + AMP + diphosphate. It catalyses the reaction (E)-cinnamate + ATP + CoA = (E)-cinnamoyl-CoA + AMP + diphosphate. The catalysed reaction is (E)-caffeate + ATP + CoA = (E)-caffeoyl-CoA + AMP + diphosphate. The enzyme catalyses (E)-ferulate + ATP + H(+) = (E)-feruloyl-AMP + diphosphate. It carries out the reaction (E)-feruloyl-AMP + CoA = (E)-feruloyl-CoA + AMP + H(+). It catalyses the reaction (E)-4-coumarate + ATP + H(+) = (E)-4-coumaroyl-AMP + diphosphate. The catalysed reaction is (E)-4-coumaroyl-AMP + CoA = (E)-4-coumaroyl-CoA + AMP + H(+). The enzyme catalyses (E)-caffeate + ATP + H(+) = (E)-caffeoyl-AMP + diphosphate. It carries out the reaction (E)-caffeoyl-AMP + CoA = (E)-caffeoyl-CoA + AMP + H(+). It participates in phytoalexin biosynthesis; 3,4',5-trihydroxystilbene biosynthesis; 3,4',5-trihydroxystilbene from trans-4-coumarate: step 1/2. Functionally, involved in the phenylpropanoid metabolism by mediating the activation of a number of hydroxycinnamates for the biosynthesis of monolignols and other phenolic secondary metabolites. Catalyzes the formation of CoA esters of cinnamate, 4-coumarate, caffeate and ferulate. Is more efficient with substrates in the following order: ferulate &gt; 4-coumarate &gt; cinnamate &gt; caffeate. Cannot convert sinapate to its corresponding CoA ester. Follows a two-step reaction mechanism, wherein the carboxylate substrate first undergoes adenylation by ATP, followed by a thioesterification in the presence of CoA to yield the final CoA thioester. In Oryza sativa subsp. japonica (Rice), this protein is 4-coumarate--CoA ligase 1.